The chain runs to 286 residues: Lipoyl synthase (286 aa).

Residues Cys34, Cys39, Cys45, Cys60, Cys64, Cys67, and Ser271 each coordinate [4Fe-4S] cluster. The 215-residue stretch at 46 to 260 (WESGTATFMI…EESAYSIGFS (215 aa)) folds into the Radical SAM core domain.

Belongs to the radical SAM superfamily. Lipoyl synthase family. Requires [4Fe-4S] cluster as cofactor.

It is found in the cytoplasm. The enzyme catalyses [[Fe-S] cluster scaffold protein carrying a second [4Fe-4S](2+) cluster] + N(6)-octanoyl-L-lysyl-[protein] + 2 oxidized [2Fe-2S]-[ferredoxin] + 2 S-adenosyl-L-methionine + 4 H(+) = [[Fe-S] cluster scaffold protein] + N(6)-[(R)-dihydrolipoyl]-L-lysyl-[protein] + 4 Fe(3+) + 2 hydrogen sulfide + 2 5'-deoxyadenosine + 2 L-methionine + 2 reduced [2Fe-2S]-[ferredoxin]. The protein operates within protein modification; protein lipoylation via endogenous pathway; protein N(6)-(lipoyl)lysine from octanoyl-[acyl-carrier-protein]: step 2/2. Catalyzes the radical-mediated insertion of two sulfur atoms into the C-6 and C-8 positions of the octanoyl moiety bound to the lipoyl domains of lipoate-dependent enzymes, thereby converting the octanoylated domains into lipoylated derivatives. The sequence is that of Lipoyl synthase from Picrophilus torridus (strain ATCC 700027 / DSM 9790 / JCM 10055 / NBRC 100828 / KAW 2/3).